The chain runs to 120 residues: UPF0102 protein FRAAL5785 (120 aa).

It belongs to the UPF0102 family.

This is UPF0102 protein FRAAL5785 from Frankia alni (strain DSM 45986 / CECT 9034 / ACN14a).